A 1012-amino-acid polypeptide reads, in one-letter code: Ankyrin repeat- and BTB/POZ domain-containing protein 3-B (1012 aa).

Residues 160 to 180 traverse the membrane as a helical segment; sequence ILSWTISVNCIAASLSALSMY. ANK repeat units lie at residues 511–540, 557–586, and 595–624; these read QGMT…DINS, RQAT…NVEG, and YTET…DPMI. The BTB domain occupies 831–897; the sequence is SDVTFLVEGK…LYCGGTDALH (67 aa).

It is found in the membrane. The chain is Ankyrin repeat- and BTB/POZ domain-containing protein 3-B (abtb3b) from Danio rerio (Zebrafish).